We begin with the raw amino-acid sequence, 197 residues long: Imidazoleglycerol-phosphate dehydratase (197 aa).

Belongs to the imidazoleglycerol-phosphate dehydratase family.

Its subcellular location is the cytoplasm. The enzyme catalyses D-erythro-1-(imidazol-4-yl)glycerol 3-phosphate = 3-(imidazol-4-yl)-2-oxopropyl phosphate + H2O. The protein operates within amino-acid biosynthesis; L-histidine biosynthesis; L-histidine from 5-phospho-alpha-D-ribose 1-diphosphate: step 6/9. The polypeptide is Imidazoleglycerol-phosphate dehydratase (Pseudomonas aeruginosa (strain LESB58)).